We begin with the raw amino-acid sequence, 449 residues long: Serine--tRNA ligase (449 aa).

256 to 258 (TSE) provides a ligand contact to L-serine. 287–289 (RAE) serves as a coordination point for ATP. Glu310 is an L-serine binding site. Residue 374–377 (EISS) participates in ATP binding. Ser410 is a binding site for L-serine.

Belongs to the class-II aminoacyl-tRNA synthetase family. Type-1 seryl-tRNA synthetase subfamily. In terms of assembly, homodimer. The tRNA molecule binds across the dimer.

The protein resides in the cytoplasm. It carries out the reaction tRNA(Ser) + L-serine + ATP = L-seryl-tRNA(Ser) + AMP + diphosphate + H(+). The catalysed reaction is tRNA(Sec) + L-serine + ATP = L-seryl-tRNA(Sec) + AMP + diphosphate + H(+). The protein operates within aminoacyl-tRNA biosynthesis; selenocysteinyl-tRNA(Sec) biosynthesis; L-seryl-tRNA(Sec) from L-serine and tRNA(Sec): step 1/1. Catalyzes the attachment of serine to tRNA(Ser). Is also able to aminoacylate tRNA(Sec) with serine, to form the misacylated tRNA L-seryl-tRNA(Sec), which will be further converted into selenocysteinyl-tRNA(Sec). This Xanthomonas oryzae pv. oryzae (strain MAFF 311018) protein is Serine--tRNA ligase.